The sequence spans 286 residues: MTQLSLKKIYSGKVRDLYEIDDKRMLMVATDRLSAFDVILDDPIDRKGEILTQISNFWFKKLAHIMPNHFTGETVYDVLPQAEADLVKDRAVVCKRLTPIKIESIVRGYLTGSGLKDYKATGTICGLKLPEGLVEASKLPEPIFTPSSKAKVGDHDINISYEECEQLIGVELAKQVREKAISLYKEAAEYALTKGIIICDTKFEFGLDENGVLTLMDEVLTPDSSRFWSVETYQEGTNPPSFDKQFVRDWLEKSGWNKQAPAPKVPADVIQKTVDKYKEVLDLLTK.

Belongs to the SAICAR synthetase family.

It carries out the reaction 5-amino-1-(5-phospho-D-ribosyl)imidazole-4-carboxylate + L-aspartate + ATP = (2S)-2-[5-amino-1-(5-phospho-beta-D-ribosyl)imidazole-4-carboxamido]succinate + ADP + phosphate + 2 H(+). The protein operates within purine metabolism; IMP biosynthesis via de novo pathway; 5-amino-1-(5-phospho-D-ribosyl)imidazole-4-carboxamide from 5-amino-1-(5-phospho-D-ribosyl)imidazole-4-carboxylate: step 1/2. The polypeptide is Phosphoribosylaminoimidazole-succinocarboxamide synthase (Histophilus somni (strain 2336) (Haemophilus somnus)).